Here is a 796-residue protein sequence, read N- to C-terminus: Probable phosphoketolase (796 aa).

Belongs to the XFP family. It depends on thiamine diphosphate as a cofactor.

This is Probable phosphoketolase from Streptomyces coelicolor (strain ATCC BAA-471 / A3(2) / M145).